Reading from the N-terminus, the 61-residue chain is Temporin-CDYa (61 aa).

Residues 1–22 (MFPLKKSLLLLFFLGTINFSFC) form the signal peptide. The propeptide occupies 23-44 (EEERNAEEERRDDPEERDVAME). A Leucine amide modification is found at Leu59.

This sequence belongs to the frog skin active peptide (FSAP) family. Temporin subfamily. Expressed by the skin glands.

Its subcellular location is the secreted. In terms of biological role, antimicrobial peptide. The polypeptide is Temporin-CDYa (Rana dybowskii (Dybovsky's frog)).